A 283-amino-acid polypeptide reads, in one-letter code: Phosphatidylserine decarboxylase proenzyme (283 aa).

Active-site charge relay system; for autoendoproteolytic cleavage activity residues include Asp-96, His-152, and Ser-250. The Schiff-base intermediate with substrate; via pyruvic acid; for decarboxylase activity role is filled by Ser-250. Ser-250 carries the post-translational modification Pyruvic acid (Ser); by autocatalysis.

Belongs to the phosphatidylserine decarboxylase family. PSD-B subfamily. Prokaryotic type I sub-subfamily. In terms of assembly, heterodimer of a large membrane-associated beta subunit and a small pyruvoyl-containing alpha subunit. Pyruvate is required as a cofactor. Post-translationally, is synthesized initially as an inactive proenzyme. Formation of the active enzyme involves a self-maturation process in which the active site pyruvoyl group is generated from an internal serine residue via an autocatalytic post-translational modification. Two non-identical subunits are generated from the proenzyme in this reaction, and the pyruvate is formed at the N-terminus of the alpha chain, which is derived from the carboxyl end of the proenzyme. The autoendoproteolytic cleavage occurs by a canonical serine protease mechanism, in which the side chain hydroxyl group of the serine supplies its oxygen atom to form the C-terminus of the beta chain, while the remainder of the serine residue undergoes an oxidative deamination to produce ammonia and the pyruvoyl prosthetic group on the alpha chain. During this reaction, the Ser that is part of the protease active site of the proenzyme becomes the pyruvoyl prosthetic group, which constitutes an essential element of the active site of the mature decarboxylase.

It localises to the cell membrane. It carries out the reaction a 1,2-diacyl-sn-glycero-3-phospho-L-serine + H(+) = a 1,2-diacyl-sn-glycero-3-phosphoethanolamine + CO2. The protein operates within phospholipid metabolism; phosphatidylethanolamine biosynthesis; phosphatidylethanolamine from CDP-diacylglycerol: step 2/2. Its function is as follows. Catalyzes the formation of phosphatidylethanolamine (PtdEtn) from phosphatidylserine (PtdSer). The sequence is that of Phosphatidylserine decarboxylase proenzyme from Acinetobacter baumannii (strain ATCC 17978 / DSM 105126 / CIP 53.77 / LMG 1025 / NCDC KC755 / 5377).